A 294-amino-acid chain; its full sequence is N-acetylmuramic acid 6-phosphate etherase (294 aa).

Positions 54-217 (VIKSFEEEGR…STASMIGVGK (164 aa)) constitute an SIS domain. The active-site Proton donor is the Glu-82. Residue Glu-113 is part of the active site.

This sequence belongs to the GCKR-like family. MurNAc-6-P etherase subfamily. Homodimer.

It catalyses the reaction N-acetyl-D-muramate 6-phosphate + H2O = N-acetyl-D-glucosamine 6-phosphate + (R)-lactate. It participates in amino-sugar metabolism; N-acetylmuramate degradation. Its function is as follows. Specifically catalyzes the cleavage of the D-lactyl ether substituent of MurNAc 6-phosphate, producing GlcNAc 6-phosphate and D-lactate. The sequence is that of N-acetylmuramic acid 6-phosphate etherase from Bacillus cereus (strain ATCC 14579 / DSM 31 / CCUG 7414 / JCM 2152 / NBRC 15305 / NCIMB 9373 / NCTC 2599 / NRRL B-3711).